Here is a 156-residue protein sequence, read N- to C-terminus: ATP synthase subunit b (156 aa).

The chain crosses the membrane as a helical span at residues 7–27; sequence LFVQAIVFLILVLFTMKFVWP.

It belongs to the ATPase B chain family. In terms of assembly, F-type ATPases have 2 components, F(1) - the catalytic core - and F(0) - the membrane proton channel. F(1) has five subunits: alpha(3), beta(3), gamma(1), delta(1), epsilon(1). F(0) has three main subunits: a(1), b(2) and c(10-14). The alpha and beta chains form an alternating ring which encloses part of the gamma chain. F(1) is attached to F(0) by a central stalk formed by the gamma and epsilon chains, while a peripheral stalk is formed by the delta and b chains.

Its subcellular location is the cell inner membrane. Its function is as follows. F(1)F(0) ATP synthase produces ATP from ADP in the presence of a proton or sodium gradient. F-type ATPases consist of two structural domains, F(1) containing the extramembraneous catalytic core and F(0) containing the membrane proton channel, linked together by a central stalk and a peripheral stalk. During catalysis, ATP synthesis in the catalytic domain of F(1) is coupled via a rotary mechanism of the central stalk subunits to proton translocation. Component of the F(0) channel, it forms part of the peripheral stalk, linking F(1) to F(0). The chain is ATP synthase subunit b from Delftia acidovorans (strain DSM 14801 / SPH-1).